A 208-amino-acid chain; its full sequence is Ribonuclease HII (208 aa).

The 191-residue stretch at 18 to 208 (GFYAGVDEVG…RPVKERLEAC (191 aa)) folds into the RNase H type-2 domain. 3 residues coordinate a divalent metal cation: Asp24, Glu25, and Asp116.

The protein belongs to the RNase HII family. The cofactor is Mn(2+). Mg(2+) serves as cofactor.

It is found in the cytoplasm. The enzyme catalyses Endonucleolytic cleavage to 5'-phosphomonoester.. Functionally, endonuclease that specifically degrades the RNA of RNA-DNA hybrids. The chain is Ribonuclease HII from Shewanella loihica (strain ATCC BAA-1088 / PV-4).